Reading from the N-terminus, the 292-residue chain is Nitrogenase iron protein (292 aa).

8 to 15 (GKGGIGKS) contacts ATP. Cys-96 contacts [4Fe-4S] cluster. Residue Arg-99 is modified to ADP-ribosylarginine; by dinitrogenase reductase ADP-ribosyltransferase. [4Fe-4S] cluster is bound at residue Cys-130.

The protein belongs to the NifH/BchL/ChlL family. As to quaternary structure, homodimer. The cofactor is [4Fe-4S] cluster. In terms of processing, the reversible ADP-ribosylation of Arg-99 inactivates the nitrogenase reductase and regulates nitrogenase activity.

It carries out the reaction N2 + 8 reduced [2Fe-2S]-[ferredoxin] + 16 ATP + 16 H2O = H2 + 8 oxidized [2Fe-2S]-[ferredoxin] + 2 NH4(+) + 16 ADP + 16 phosphate + 6 H(+). Its function is as follows. The key enzymatic reactions in nitrogen fixation are catalyzed by the nitrogenase complex, which has 2 components: the iron protein and the molybdenum-iron protein. This is Nitrogenase iron protein from Synechococcus sp. (strain JA-3-3Ab) (Cyanobacteria bacterium Yellowstone A-Prime).